The primary structure comprises 513 residues: ATP synthase subunit alpha (513 aa).

169-176 contributes to the ATP binding site; sequence GDRQTGKT.

Belongs to the ATPase alpha/beta chains family. As to quaternary structure, F-type ATPases have 2 components, CF(1) - the catalytic core - and CF(0) - the membrane proton channel. CF(1) has five subunits: alpha(3), beta(3), gamma(1), delta(1), epsilon(1). CF(0) has three main subunits: a(1), b(2) and c(9-12). The alpha and beta chains form an alternating ring which encloses part of the gamma chain. CF(1) is attached to CF(0) by a central stalk formed by the gamma and epsilon chains, while a peripheral stalk is formed by the delta and b chains.

The protein localises to the cell inner membrane. The enzyme catalyses ATP + H2O + 4 H(+)(in) = ADP + phosphate + 5 H(+)(out). In terms of biological role, produces ATP from ADP in the presence of a proton gradient across the membrane. The alpha chain is a regulatory subunit. The protein is ATP synthase subunit alpha of Pasteurella multocida (strain Pm70).